Reading from the N-terminus, the 372-residue chain is Bifunctional enzyme IspD/IspF (372 aa).

The interval 1 to 211 is 2-C-methyl-D-erythritol 4-phosphate cytidylyltransferase; it reads MLDISLIMLG…SALKAPENEL (211 aa). The segment at 212 to 372 is 2-C-methyl-D-erythritol 2,4-cyclodiphosphate synthase; it reads FVGSGFDVHE…SLKFYNWTQI (161 aa). Residues D218 and H220 each coordinate a divalent metal cation. 4-CDP-2-C-methyl-D-erythritol 2-phosphate contacts are provided by residues 218–220 and 244–245; these read DVH and HS. A divalent metal cation is bound at residue H252. Residues 266-268, 271-275, 342-345, F349, and R352 contribute to the 4-CDP-2-C-methyl-D-erythritol 2-phosphate site; these read DIG, FPDTD, and TTTE.

This sequence in the N-terminal section; belongs to the IspD/TarI cytidylyltransferase family. IspD subfamily. It in the C-terminal section; belongs to the IspF family. It depends on a divalent metal cation as a cofactor.

The catalysed reaction is 2-C-methyl-D-erythritol 4-phosphate + CTP + H(+) = 4-CDP-2-C-methyl-D-erythritol + diphosphate. It catalyses the reaction 4-CDP-2-C-methyl-D-erythritol 2-phosphate = 2-C-methyl-D-erythritol 2,4-cyclic diphosphate + CMP. Its pathway is isoprenoid biosynthesis; isopentenyl diphosphate biosynthesis via DXP pathway; isopentenyl diphosphate from 1-deoxy-D-xylulose 5-phosphate: step 2/6. The protein operates within isoprenoid biosynthesis; isopentenyl diphosphate biosynthesis via DXP pathway; isopentenyl diphosphate from 1-deoxy-D-xylulose 5-phosphate: step 4/6. Functionally, bifunctional enzyme that catalyzes the formation of 4-diphosphocytidyl-2-C-methyl-D-erythritol from CTP and 2-C-methyl-D-erythritol 4-phosphate (MEP) (IspD), and catalyzes the conversion of 4-diphosphocytidyl-2-C-methyl-D-erythritol 2-phosphate (CDP-ME2P) to 2-C-methyl-D-erythritol 2,4-cyclodiphosphate (ME-CPP) with a corresponding release of cytidine 5-monophosphate (CMP) (IspF). The sequence is that of Bifunctional enzyme IspD/IspF from Campylobacter concisus (strain 13826).